The following is a 788-amino-acid chain: Protein kintoun (788 aa).

3 disordered regions span residues 194–249 (LRKP…SEQD), 415–438 (NNSE…EISP), and 628–754 (HKEH…SSSV). Over residues 225–241 (GKEKKDQKRVIKEEHKQ) the composition is skewed to basic and acidic residues. A compositionally biased stretch (polar residues) spans 417–427 (SEGLTSESNLD). Basic and acidic residues-rich tracts occupy residues 628-644 (HKEH…DVGV) and 667-682 (ENTE…RYEE). Polar residues-rich tracts occupy residues 685-701 (STSC…QKDS) and 744-754 (NFDSRPASSSV).

The protein belongs to the PIH1 family. Kintoun subfamily.

It is found in the cytoplasm. It localises to the dynein axonemal particle. Functionally, required for cytoplasmic pre-assembly of axonemal dyneins, thereby playing a central role in motility in cilia and flagella. Involved in pre-assembly of dynein arm complexes in the cytoplasm before intraflagellar transport loads them for the ciliary compartment. This chain is Protein kintoun, found in Xenopus laevis (African clawed frog).